We begin with the raw amino-acid sequence, 494 residues long: UDP-N-acetylmuramate--L-alanine ligase (494 aa).

122 to 128 provides a ligand contact to ATP; that stretch reads GTHGKTT.

This sequence belongs to the MurCDEF family.

It is found in the cytoplasm. It catalyses the reaction UDP-N-acetyl-alpha-D-muramate + L-alanine + ATP = UDP-N-acetyl-alpha-D-muramoyl-L-alanine + ADP + phosphate + H(+). Its pathway is cell wall biogenesis; peptidoglycan biosynthesis. Its function is as follows. Cell wall formation. The polypeptide is UDP-N-acetylmuramate--L-alanine ligase (Mycobacterium bovis (strain ATCC BAA-935 / AF2122/97)).